The chain runs to 251 residues: Diphthine synthase (251 aa).

S-adenosyl-L-methionine is bound by residues D83, L86, 111–112 (SI), L163, and L205.

Belongs to the diphthine synthase family. Homodimer.

The enzyme catalyses 2-[(3S)-amino-3-carboxypropyl]-L-histidyl-[translation elongation factor 2] + 3 S-adenosyl-L-methionine = diphthine-[translation elongation factor 2] + 3 S-adenosyl-L-homocysteine + 3 H(+). The protein operates within protein modification; peptidyl-diphthamide biosynthesis. Its function is as follows. S-adenosyl-L-methionine-dependent methyltransferase that catalyzes the trimethylation of the amino group of the modified target histidine residue in translation elongation factor 2 (EF-2), to form an intermediate called diphthine. The three successive methylation reactions represent the second step of diphthamide biosynthesis. This is Diphthine synthase from Pyrobaculum calidifontis (strain DSM 21063 / JCM 11548 / VA1).